Here is a 254-residue protein sequence, read N- to C-terminus: Small ribosomal subunit protein uS2 (254 aa).

Belongs to the universal ribosomal protein uS2 family.

This is Small ribosomal subunit protein uS2 from Legionella pneumophila subsp. pneumophila (strain Philadelphia 1 / ATCC 33152 / DSM 7513).